A 186-amino-acid polypeptide reads, in one-letter code: Large ribosomal subunit protein bL12c (186 aa).

Polar residues predominate over residues 1 to 11 (MASTLSTITLR). Residues 1–24 (MASTLSTITLRSPSPSTATSTHAS) are disordered. The transit peptide at 1–53 (MASTLSTITLRSPSPSTATSTHASIPFPKKTLEFPIRTPKLQNRRATFLRPLA) directs the protein to the chloroplast. Residues 12 to 24 (SPSPSTATSTHAS) are compositionally biased toward low complexity.

It belongs to the bacterial ribosomal protein bL12 family.

It is found in the plastid. It localises to the chloroplast. In Nicotiana sylvestris (Wood tobacco), this protein is Large ribosomal subunit protein bL12c.